The primary structure comprises 275 residues: Large ribosomal subunit protein uL2 (275 aa).

The tract at residues 223–275 (VAMNPIDHPHGGGEGRTGEAREPVSPWGTPSKGYKTRRNKRTNNMIVQRRKRK) is disordered. The span at 229–244 (DHPHGGGEGRTGEARE) shows a compositional bias: basic and acidic residues.

The protein belongs to the universal ribosomal protein uL2 family. Part of the 50S ribosomal subunit. Forms a bridge to the 30S subunit in the 70S ribosome.

One of the primary rRNA binding proteins. Required for association of the 30S and 50S subunits to form the 70S ribosome, for tRNA binding and peptide bond formation. It has been suggested to have peptidyltransferase activity; this is somewhat controversial. Makes several contacts with the 16S rRNA in the 70S ribosome. In Bordetella avium (strain 197N), this protein is Large ribosomal subunit protein uL2.